We begin with the raw amino-acid sequence, 209 residues long: Guanylate kinase (209 aa).

A Guanylate kinase-like domain is found at 10–189 (GLLLVLSAPS…AFSDLRSVVV (180 aa)). Residue 17-24 (APSGAGKT) participates in ATP binding.

It belongs to the guanylate kinase family.

The protein localises to the cytoplasm. The enzyme catalyses GMP + ATP = GDP + ADP. Functionally, essential for recycling GMP and indirectly, cGMP. This is Guanylate kinase from Myxococcus xanthus (strain DK1622).